The sequence spans 207 residues: LexA repressor (207 aa).

The H-T-H motif DNA-binding region spans valine 33–asparagine 52. Active-site for autocatalytic cleavage activity residues include serine 129 and lysine 166.

It belongs to the peptidase S24 family. Homodimer.

The catalysed reaction is Hydrolysis of Ala-|-Gly bond in repressor LexA.. In terms of biological role, represses a number of genes involved in the response to DNA damage (SOS response), including recA and lexA. In the presence of single-stranded DNA, RecA interacts with LexA causing an autocatalytic cleavage which disrupts the DNA-binding part of LexA, leading to derepression of the SOS regulon and eventually DNA repair. The sequence is that of LexA repressor from Oleidesulfovibrio alaskensis (strain ATCC BAA-1058 / DSM 17464 / G20) (Desulfovibrio alaskensis).